A 292-amino-acid polypeptide reads, in one-letter code: Protein/nucleic acid deglycase HchA (292 aa).

Positions 1–12 (MSQDVNELSKQP) are enriched in polar residues. The tract at residues 1–23 (MSQDVNELSKQPTPDKAEDNAFF) is disordered. The Nucleophile role is filled by Cys-190.

The protein belongs to the peptidase C56 family. HchA subfamily.

It is found in the cytoplasm. The enzyme catalyses N(omega)-(1-hydroxy-2-oxopropyl)-L-arginyl-[protein] + H2O = lactate + L-arginyl-[protein] + H(+). It catalyses the reaction N(6)-(1-hydroxy-2-oxopropyl)-L-lysyl-[protein] + H2O = lactate + L-lysyl-[protein] + H(+). The catalysed reaction is S-(1-hydroxy-2-oxopropyl)-L-cysteinyl-[protein] + H2O = lactate + L-cysteinyl-[protein] + H(+). It carries out the reaction N(omega)-(1-hydroxy-2-oxoethyl)-L-arginyl-[protein] + H2O = L-arginyl-[protein] + glycolate + H(+). The enzyme catalyses N(6)-(1-hydroxy-2-oxoethyl)-L-lysyl-[protein] + H2O = glycolate + L-lysyl-[protein] + H(+). It catalyses the reaction S-(1-hydroxy-2-oxoethyl)-L-cysteinyl-[protein] + H2O = glycolate + L-cysteinyl-[protein] + H(+). The catalysed reaction is N(2)-(1-hydroxy-2-oxopropyl)-dGTP + H2O = lactate + dGTP + H(+). It carries out the reaction N(2)-(1-hydroxy-2-oxopropyl)-GTP + H2O = lactate + GTP + H(+). The enzyme catalyses N(2)-(1-hydroxy-2-oxopropyl)-GDP + H2O = lactate + GDP + H(+). It catalyses the reaction N(2)-(1-hydroxy-2-oxopropyl)-GMP + H2O = lactate + GMP + H(+). The catalysed reaction is N(2)-(1-hydroxy-2-oxoethyl)-dGTP + H2O = dGTP + glycolate + H(+). It carries out the reaction N(2)-(1-hydroxy-2-oxoethyl)-GTP + H2O = glycolate + GTP + H(+). The enzyme catalyses N(2)-(1-hydroxy-2-oxoethyl)-GDP + H2O = glycolate + GDP + H(+). It catalyses the reaction N(2)-(1-hydroxy-2-oxoethyl)-GMP + H2O = glycolate + GMP + H(+). The catalysed reaction is an N(2)-(1-hydroxy-2-oxopropyl)-guanosine in RNA + H2O = a guanosine in RNA + lactate + H(+). It carries out the reaction an N(2)-(1-hydroxy-2-oxopropyl)-2'-deoxyguanosine in DNA + H2O = a 2'-deoxyguanosine in DNA + lactate + H(+). The enzyme catalyses an N(2)-(1-hydroxy-2-oxoethyl)-guanosine in RNA + H2O = a guanosine in RNA + glycolate + H(+). It catalyses the reaction an N(2)-(1-hydroxy-2-oxoethyl)-2'-deoxyguanosine in DNA + H2O = a 2'-deoxyguanosine in DNA + glycolate + H(+). Functionally, protein and nucleotide deglycase that catalyzes the deglycation of the Maillard adducts formed between amino groups of proteins or nucleotides and reactive carbonyl groups of glyoxals. Thus, functions as a protein deglycase that repairs methylglyoxal- and glyoxal-glycated proteins, and releases repaired proteins and lactate or glycolate, respectively. Deglycates cysteine, arginine and lysine residues in proteins, and thus reactivates these proteins by reversing glycation by glyoxals. Acts on early glycation intermediates (hemithioacetals and aminocarbinols), preventing the formation of Schiff bases and advanced glycation endproducts (AGE). Also functions as a nucleotide deglycase able to repair glycated guanine in the free nucleotide pool (GTP, GDP, GMP, dGTP) and in DNA and RNA. Is thus involved in a major nucleotide repair system named guanine glycation repair (GG repair), dedicated to reversing methylglyoxal and glyoxal damage via nucleotide sanitization and direct nucleic acid repair. Plays an important role in protecting cells from carbonyl stress. The sequence is that of Protein/nucleic acid deglycase HchA from Staphylococcus aureus (strain MSSA476).